Reading from the N-terminus, the 1582-residue chain is Dynein axonemal assembly factor 1 homolog (1582 aa).

LRR repeat units lie at residues 38–60 (RLNDVLYLHFQGYQCIENLDEYT), 61–82 (ELKSLWLESNAISEIQNLTKLT), 83–104 (KLKCLYLQNNLITKMENLEFNR), 105–126 (ELDTLNLSQNHIRKIENIGTDI), 129–150 (VLNTLNITSNYLTDSASLAALV), and 154–175 (TLSVLDLSNNRIDDILIVKIFE). An LRRCT domain is found at 189-227 (PVVSRLPQYRKTLILACKELTYLDSRPVFPRDRACAEAW). 11 disordered regions span residues 245-420 (AERR…SEMD), 560-587 (SSDVQEQAKDPSESDEEPTEEEMEVKSQ), 859-878 (FSKDTPESLDAQLAKDEDRR), 913-942 (DTGELEELPPPPELISDSESEKEVEEDDDA), 1073-1092 (SSNEDLEAKHKSNDDPLVER), 1101-1137 (MQRMKEHEERARELQEQLEKEKEEENSGPIKLSMGEG), 1150-1218 (TEII…QAEG), 1305-1345 (KDNE…TAKD), 1358-1438 (LDPE…PYQT), 1484-1517 (EDSKIGDGPTEKFLDQKAQDNTENTDERPENPKN), and 1529-1548 (PSESLEDTEATETPEVSTEQ). Low complexity predominate over residues 313-327 (ESQASEHSTTSSTSA). The span at 339 to 392 (HIAERISNRRVKPLEGRPKVLYDEAASGDEKAVTTTDSKKDSNAEDLPELKDIT) shows a compositional bias: basic and acidic residues. Over residues 409–420 (TLLQSDSGSEMD) the composition is skewed to polar residues. A compositionally biased stretch (acidic residues) spans 572-582 (ESDEEPTEEEM). A compositionally biased stretch (acidic residues) spans 928-942 (SDSESEKEVEEDDDA). Composition is skewed to basic and acidic residues over residues 1078–1092 (LEAKHKSNDDPLVER) and 1103–1125 (RMKEHEERARELQEQLEKEKEEE). Low complexity predominate over residues 1166-1178 (EGGAQQEEGGAQS). Composition is skewed to basic and acidic residues over residues 1321–1335 (PKEEHIPEVKSETET), 1398–1427 (SALKETTEIGDSEKQENKTQDETLDPKDTE), and 1484–1514 (EDSKIGDGPTEKFLDQKAQDNTENTDERPEN). A compositionally biased stretch (acidic residues) spans 1529-1540 (PSESLEDTEATE).

Belongs to the DNAAF1 family.

Its subcellular location is the cell projection. The protein localises to the cilium. Functionally, cilium-specific protein required for cilia structures. The protein is Dynein axonemal assembly factor 1 homolog (dtr) of Drosophila pseudoobscura pseudoobscura (Fruit fly).